A 388-amino-acid polypeptide reads, in one-letter code: Mannitol-1-phosphate 5-dehydrogenase (388 aa).

Alanine 4–glycine 15 provides a ligand contact to NAD(+).

It belongs to the mannitol dehydrogenase family.

It carries out the reaction D-mannitol 1-phosphate + NAD(+) = beta-D-fructose 6-phosphate + NADH + H(+). In Thermoanaerobacter pseudethanolicus (strain ATCC 33223 / 39E) (Clostridium thermohydrosulfuricum), this protein is Mannitol-1-phosphate 5-dehydrogenase.